The following is a 333-amino-acid chain: GDP-fucose transporter 1 (333 aa).

8 consecutive transmembrane segments (helical) span residues 13–33 (SIKI…MVFL), 45–65 (APMF…FILG), 95–115 (LVFV…GVAF), 139–159 (TSMP…VGVN), 169–189 (MAGI…AIYI), 211–231 (AIFL…IAAS), 239–259 (YWFL…VSML), and 293–313 (TATW…YVLV).

It belongs to the TPT transporter family. SLC35C subfamily.

It is found in the golgi apparatus membrane. It catalyses the reaction GMP(out) + GDP-beta-L-fucose(in) = GMP(in) + GDP-beta-L-fucose(out). Functionally, antiporter specific for GDP-l-fucose and depending on the concomitant reverse transport of GMP. Involved in GDP-fucose import from the cytoplasm into the Golgi lumen. This chain is GDP-fucose transporter 1 (slc35c1), found in Monosiga brevicollis (Choanoflagellate).